The chain runs to 192 residues: Interferon (192 aa).

An N-terminal signal peptide occupies residues 1 to 30 (MAVPASPQHPRGYGILLLTLLMKALAAAAA). 3 disulfides stabilise this stretch: C31–C128, C60–C154, and C67–C167. N-linked (GlcNAc...) asparagine glycosylation is found at N70 and N77.

This sequence belongs to the alpha/beta interferon family.

The protein localises to the secreted. In terms of biological role, has antiviral activities. In Meleagris gallopavo (Wild turkey), this protein is Interferon.